The sequence spans 388 residues: Chorismate synthase (388 aa).

2 residues coordinate NADP(+): Arg-39 and Arg-45. FMN is bound by residues 130 to 132, 251 to 252, Gly-296, 311 to 315, and Arg-337; these read RSS, NA, and KPIPT.

Belongs to the chorismate synthase family. In terms of assembly, homotetramer. FMNH2 is required as a cofactor.

It carries out the reaction 5-O-(1-carboxyvinyl)-3-phosphoshikimate = chorismate + phosphate. It functions in the pathway metabolic intermediate biosynthesis; chorismate biosynthesis; chorismate from D-erythrose 4-phosphate and phosphoenolpyruvate: step 7/7. In terms of biological role, catalyzes the anti-1,4-elimination of the C-3 phosphate and the C-6 proR hydrogen from 5-enolpyruvylshikimate-3-phosphate (EPSP) to yield chorismate, which is the branch point compound that serves as the starting substrate for the three terminal pathways of aromatic amino acid biosynthesis. This reaction introduces a second double bond into the aromatic ring system. This chain is Chorismate synthase, found in Streptococcus pneumoniae serotype 2 (strain D39 / NCTC 7466).